The following is a 307-amino-acid chain: Major immediate early protein (307 aa).

The segment at 39 to 92 (CAVCLETYCVQSNNIIDFLMPSECTHLFCYKCVLNMYKNAMNVPRAAVSCPMCN) adopts an RING-type zinc-finger fold.

The chain is Major immediate early protein (PE38) from Orgyia pseudotsugata multicapsid polyhedrosis virus (OpMNPV).